The chain runs to 251 residues: GTP cyclohydrolase FolE2 (251 aa).

The protein belongs to the GTP cyclohydrolase IV family.

The catalysed reaction is GTP + H2O = 7,8-dihydroneopterin 3'-triphosphate + formate + H(+). It functions in the pathway cofactor biosynthesis; 7,8-dihydroneopterin triphosphate biosynthesis; 7,8-dihydroneopterin triphosphate from GTP: step 1/1. In terms of biological role, converts GTP to 7,8-dihydroneopterin triphosphate. This Desulfotalea psychrophila (strain LSv54 / DSM 12343) protein is GTP cyclohydrolase FolE2.